Reading from the N-terminus, the 901-residue chain is Aconitate hydratase A (901 aa).

[4Fe-4S] cluster is bound by residues Cys443, Cys509, and Cys512.

It belongs to the aconitase/IPM isomerase family. In terms of assembly, monomer. It depends on [4Fe-4S] cluster as a cofactor.

The enzyme catalyses citrate = D-threo-isocitrate. It catalyses the reaction (2S,3R)-3-hydroxybutane-1,2,3-tricarboxylate = 2-methyl-cis-aconitate + H2O. It functions in the pathway carbohydrate metabolism; tricarboxylic acid cycle; isocitrate from oxaloacetate: step 2/2. Its pathway is organic acid metabolism; propanoate degradation. Its function is as follows. Involved in the catabolism of short chain fatty acids (SCFA) via the tricarboxylic acid (TCA)(acetyl degradation route) and probably the 2-methylcitrate cycle I (propionate degradation route). Catalyzes the reversible isomerization of citrate to isocitrate via cis-aconitate. Could catalyze the hydration of 2-methyl-cis-aconitate to yield (2R,3S)-2-methylisocitrate. The apo form of AcnA functions as a RNA-binding regulatory protein. This Staphylococcus epidermidis (strain ATCC 35984 / DSM 28319 / BCRC 17069 / CCUG 31568 / BM 3577 / RP62A) protein is Aconitate hydratase A (acnA).